The sequence spans 389 residues: Mesotocin receptor (389 aa).

Over 1-50 (MEGLCLNLDCSELPNSSWVNSSMENQNHSSNSTRDPLKRNEEVAKVEVTV) the chain is Extracellular. 4 N-linked (GlcNAc...) asparagine glycosylation sites follow: N15, N20, N27, and N31. The chain crosses the membrane as a helical span at residues 51 to 71 (LALILFLALAGNICVLLGIYI). The Cytoplasmic portion of the chain corresponds to 72–87 (NRHKHSRMYFFMKHLS). A helical membrane pass occupies residues 88–108 (IADLVVAIFQVLPQLIWDITF). Over 109–119 (RFYAPDLVCRL) the chain is Extracellular. Residues C117 and C192 are joined by a disulfide bond. A helical membrane pass occupies residues 120-140 (VTYLQVVGMFASTYMLLLMSL). At 141–159 (DRCLAICQPLRSLHRRSDC) the chain is on the cytoplasmic side. The helical transmembrane segment at 160-180 (VYVLFTWILSFLLSTPQTVIF) threads the bilayer. The Extracellular portion of the chain corresponds to 181 to 207 (SLTEVGNGVYDCRADFIQPWGPKAYIT). A helical membrane pass occupies residues 208-228 (WITLAVYIIPVMILSVCYGLI). The Cytoplasmic portion of the chain corresponds to 229–275 (SYKIWQNIRLKTVCESNLRLSTSRRATLSRVSSVRLISKAKIRTVKM). Residues 276–296 (TFIIVLAYIVCWTPFFFVQMW) traverse the membrane as a helical segment. The Extracellular portion of the chain corresponds to 297-308 (SVWDPNPPKEAS). The chain crosses the membrane as a helical span at residues 309–329 (LFIIAMLLGSLNSCCNPWIYM). Topologically, residues 330 to 389 (LFTGHLFHDLLQSFLCCSARYLKTQQQGSDLSASRKSNSSTFVLSRKSSSQKSITQPSTA) are cytoplasmic. Positions 360-389 (LSASRKSNSSTFVLSRKSSSQKSITQPSTA) are disordered.

The protein belongs to the G-protein coupled receptor 1 family. Vasopressin/oxytocin receptor subfamily. Highly expressed in the bladder. Also expressed in kidney, brain and skeletal muscle.

It localises to the cell membrane. In terms of biological role, binds to mesotocin and may play a role in the regulation of water and salt transport. This Rhinella marina (Cane toad) protein is Mesotocin receptor.